Consider the following 83-residue polypeptide: Alpha-toxin CvIV4 (83 aa).

The N-terminal stretch at Met1–Cys19 is a signal peptide. The region spanning Lys21–Asn79 is the LCN-type CS-alpha/beta domain. 4 disulfides stabilise this stretch: Cys31–Cys78, Cys35–Cys55, Cys41–Cys61, and Cys45–Cys63.

It belongs to the long (4 C-C) scorpion toxin superfamily. Sodium channel inhibitor family. As to expression, expressed by the venom gland.

The protein resides in the secreted. Its function is as follows. This toxin significantly slows the fast inactivation of Nav1.2/SCN2A (EC(50)=580 nM), Nav1.3/SCN3A (EC(50)=1310 nM), Nav1.4/SCN4A (EC(50)=530 nM), and Nav1.7/SCN9A (EC(50)=1340 nM). The toxin does not affect the peak amplitude of Nav1.7 currents. On all channels cited above, the toxin requires depolarizing potentials to slow channel inactivation. In addition, the toxin has no or very weak effects on the voltage-dependence of steady-state inactivation, and on voltage-dependence of activation. In vivo, it produces paw licking in mice equivalent to the effects of whole venom. In Centruroides vittatus (Striped bark scorpion), this protein is Alpha-toxin CvIV4.